The primary structure comprises 183 residues: Holliday junction branch migration complex subunit RuvA (183 aa).

Positions 1 to 63 (MIVGLIGVVE…EDANLLYGFL (63 aa)) are domain I. Residues 64 to 139 (EESEKILFER…FFIQDENRPA (76 aa)) are domain II. A139 is a region of interest (flexible linker). A domain III region spans residues 139 to 183 (ARNEVFLALESLGFKSAEINKVLKTLKPNLSIEAAIKEALQQLRS).

This sequence belongs to the RuvA family. As to quaternary structure, homotetramer. Forms an RuvA(8)-RuvB(12)-Holliday junction (HJ) complex. HJ DNA is sandwiched between 2 RuvA tetramers; dsDNA enters through RuvA and exits via RuvB. An RuvB hexamer assembles on each DNA strand where it exits the tetramer. Each RuvB hexamer is contacted by two RuvA subunits (via domain III) on 2 adjacent RuvB subunits; this complex drives branch migration. In the full resolvosome a probable DNA-RuvA(4)-RuvB(12)-RuvC(2) complex forms which resolves the HJ.

The protein resides in the cytoplasm. In terms of biological role, the RuvA-RuvB-RuvC complex processes Holliday junction (HJ) DNA during genetic recombination and DNA repair, while the RuvA-RuvB complex plays an important role in the rescue of blocked DNA replication forks via replication fork reversal (RFR). RuvA specifically binds to HJ cruciform DNA, conferring on it an open structure. The RuvB hexamer acts as an ATP-dependent pump, pulling dsDNA into and through the RuvAB complex. HJ branch migration allows RuvC to scan DNA until it finds its consensus sequence, where it cleaves and resolves the cruciform DNA. In Helicobacter pylori (strain HPAG1), this protein is Holliday junction branch migration complex subunit RuvA.